We begin with the raw amino-acid sequence, 860 residues long: Valine--tRNA ligase (860 aa).

A 'HIGH' region motif is present at residues 53-63; sequence PNLTGILHIGH. Residues 527-531 carry the 'KMSKS' region motif; the sequence is KMSKS. Residue Lys530 coordinates ATP. Positions 794–860 form a coiled coil; that stretch reads QDKTKIVDKL…LKQDKLNSLK (67 aa).

Belongs to the class-I aminoacyl-tRNA synthetase family. ValS type 1 subfamily. Monomer.

The protein resides in the cytoplasm. The catalysed reaction is tRNA(Val) + L-valine + ATP = L-valyl-tRNA(Val) + AMP + diphosphate. In terms of biological role, catalyzes the attachment of valine to tRNA(Val). As ValRS can inadvertently accommodate and process structurally similar amino acids such as threonine, to avoid such errors, it has a 'posttransfer' editing activity that hydrolyzes mischarged Thr-tRNA(Val) in a tRNA-dependent manner. The sequence is that of Valine--tRNA ligase from Mycoplasmoides gallisepticum (strain R(low / passage 15 / clone 2)) (Mycoplasma gallisepticum).